A 196-amino-acid polypeptide reads, in one-letter code: Imidazoleglycerol-phosphate dehydratase (196 aa).

This sequence belongs to the imidazoleglycerol-phosphate dehydratase family.

It localises to the cytoplasm. It carries out the reaction D-erythro-1-(imidazol-4-yl)glycerol 3-phosphate = 3-(imidazol-4-yl)-2-oxopropyl phosphate + H2O. It functions in the pathway amino-acid biosynthesis; L-histidine biosynthesis; L-histidine from 5-phospho-alpha-D-ribose 1-diphosphate: step 6/9. The polypeptide is Imidazoleglycerol-phosphate dehydratase (Solidesulfovibrio magneticus (strain ATCC 700980 / DSM 13731 / RS-1) (Desulfovibrio magneticus)).